A 492-amino-acid chain; its full sequence is Glutamyl-tRNA(Gln) amidotransferase subunit A (492 aa).

Catalysis depends on charge relay system residues Lys-78 and Ser-158. Ser-182 functions as the Acyl-ester intermediate in the catalytic mechanism.

This sequence belongs to the amidase family. GatA subfamily. As to quaternary structure, heterotrimer of A, B and C subunits.

It catalyses the reaction L-glutamyl-tRNA(Gln) + L-glutamine + ATP + H2O = L-glutaminyl-tRNA(Gln) + L-glutamate + ADP + phosphate + H(+). Its function is as follows. Allows the formation of correctly charged Gln-tRNA(Gln) through the transamidation of misacylated Glu-tRNA(Gln) in organisms which lack glutaminyl-tRNA synthetase. The reaction takes place in the presence of glutamine and ATP through an activated gamma-phospho-Glu-tRNA(Gln). In Orientia tsutsugamushi (strain Ikeda) (Rickettsia tsutsugamushi), this protein is Glutamyl-tRNA(Gln) amidotransferase subunit A.